The primary structure comprises 337 residues: MEKIKIGDRYVGKGEPTFIIAEGGLNHNGDIDIGKELVKEAKKCGADAIKFQSYHTEDFISKKSEYYELFKSLELSEEEFYELKEYAEKIGIMFISTPLDLKYVDILNKMNVPAFKIASGDLTFYPLLEKVAKTGKPVILSTGMSDIGEIWEAVKVLENNGCRDIILLHCISSYPTPYEDVNLNAIKTLKSIFNIPVGYSDHTLGILAPVVSVALGADVIEKHFTLDKNMEGPDHALSADPEEFKEMVNNIRLVEKMLGSGEKIPMPSERDVIVEARRSIVAKRNIKKGEYLSVDNISFKRPGRGIETKYLSIILNRKIKNDKEEDDIIYWDDLLGD.

In terms of domain architecture, AFP-like spans 279-337 (SIVAKRNIKKGEYLSVDNISFKRPGRGIETKYLSIILNRKIKNDKEEDDIIYWDDLLGD).

It to B.subtilis SpsE.

This is an uncharacterized protein from Methanocaldococcus jannaschii (strain ATCC 43067 / DSM 2661 / JAL-1 / JCM 10045 / NBRC 100440) (Methanococcus jannaschii).